A 452-amino-acid chain; its full sequence is Eukaryotic translation initiation factor 3 subunit E (452 aa).

The segment covering 1–17 (MADNTPTTANDLLNDAT) has biased composition (polar residues). The disordered stretch occupies residues 1–23 (MADNTPTTANDLLNDATQAAAKS). In terms of domain architecture, PCI spans 246-426 (PFFNHEPARD…GTVVMNHPPS (181 aa)).

Belongs to the eIF-3 subunit E family. In terms of assembly, component of the eukaryotic translation initiation factor 3 (eIF-3) complex.

Its subcellular location is the cytoplasm. Its function is as follows. Component of the eukaryotic translation initiation factor 3 (eIF-3) complex, which is involved in protein synthesis of a specialized repertoire of mRNAs and, together with other initiation factors, stimulates binding of mRNA and methionyl-tRNAi to the 40S ribosome. The eIF-3 complex specifically targets and initiates translation of a subset of mRNAs involved in cell proliferation. The sequence is that of Eukaryotic translation initiation factor 3 subunit E (int6) from Botryotinia fuckeliana (strain B05.10) (Noble rot fungus).